Consider the following 492-residue polypeptide: Catalase isozyme 1 (492 aa).

Residues His65 and Asn138 contribute to the active site. Tyr348 is a heme binding site.

It belongs to the catalase family. In terms of assembly, homotetramer. The cofactor is heme. As to expression, in whole endosperms (aleurones plus starchy endosperm), in isolated aleurones and in developing seeds.

The protein localises to the peroxisome. Its subcellular location is the glyoxysome. It carries out the reaction 2 H2O2 = O2 + 2 H2O. Functionally, occurs in almost all aerobically respiring organisms and serves to protect cells from the toxic effects of hydrogen peroxide. The polypeptide is Catalase isozyme 1 (CAT1) (Hordeum vulgare (Barley)).